The chain runs to 504 residues: DnaJ homolog subfamily C member 3 (504 aa).

Positions 1 to 31 are cleaved as a signal peptide; sequence MVAPGSVRSRLGAVFPFLLVLVDLQYEGAEC. TPR repeat units follow at residues 37 to 70, 72 to 104, 105 to 138, 154 to 187, 188 to 221, 222 to 255, 268 to 301, 306 to 339, and 340 to 373; these read VEKHLELGKKLLAAGQLADALSQFHAAVDGDPDN, IAYYRRATVFLAMGKSKAALPDLTRVIELKMDF, TAARLQRGHLLLKQGRLAEAEDDFKKVLKSNPSE, MQRLRAQALDAFDSADYTAAITFLDEILEVCVWD, AELRELRAECFIKEGEPRKAISDLKAASKLKNDN, TEAFYKISILYYQLGDHELSLSEVRECLKLDQDH, LNKLIGSAEELIRDGRYTDATSKYESVMKAEPSV, VRSKERICHCFSKDEKPVEAIKICSEVLQLEPDN, and VNALKDRAEAYLIEEMYDEAIQDYEAAQEQNEND. A disulfide bridge connects residues Cys-248 and Cys-258. Ser-274 is modified (phosphoserine). Cys-313 and Cys-329 are joined by a disulfide. The tract at residues 375-393 is flexible linker; it reads QIREGLEKAQRLLKQSQKR. Residues 394-462 form the J domain; it reads DYYKILGVKR…EMRRKFDDGE (69 aa). Residues 451–481 form a disordered region; the sequence is DPEMRRKFDDGEDPLDAETQQGGGSNPFHRS. A Phosphoserine modification is found at Ser-475.

In terms of assembly, interacts with EIF2AK2 and EIF2AK3. Forms a trimeric complex with DNAJB1 and HSPA8. Interacts with THAP12.

The protein resides in the endoplasmic reticulum. Involved in the unfolded protein response (UPR) during ER stress. Co-chaperone of HSPA8/HSC70, it stimulates its ATPase activity. May inhibit both the autophosphorylation of EIF2AK2/PKR and the ability of EIF2AK2 to catalyze phosphorylation of the EIF2A. May inhibit EIF2AK3/PERK activity. The sequence is that of DnaJ homolog subfamily C member 3 (Dnajc3) from Rattus norvegicus (Rat).